Reading from the N-terminus, the 126-residue chain is Small ribosomal subunit protein uS12c (126 aa).

This sequence belongs to the universal ribosomal protein uS12 family. Part of the 30S ribosomal subunit.

It is found in the plastid. It localises to the chloroplast. Its function is as follows. With S4 and S5 plays an important role in translational accuracy. Located at the interface of the 30S and 50S subunits. In Trieres chinensis (Marine centric diatom), this protein is Small ribosomal subunit protein uS12c (rps12).